A 792-amino-acid polypeptide reads, in one-letter code: Probable exo-1,4-beta-xylosidase xlnD (792 aa).

An N-terminal signal peptide occupies residues 1-20 (MSVAKSIAAVLVALLPGALA). N-linked (GlcNAc...) asparagine glycans are attached at residues N23, N87, N118, N142, and N246. Residue D310 is part of the active site. N-linked (GlcNAc...) asparagine glycosylation is found at N326, N385, N404, N440, N477, N518, N679, and N701.

This sequence belongs to the glycosyl hydrolase 3 family.

It localises to the secreted. It catalyses the reaction Hydrolysis of (1-&gt;4)-beta-D-xylans, to remove successive D-xylose residues from the non-reducing termini.. It functions in the pathway glycan degradation; xylan degradation. In terms of biological role, xylan 1,4-beta-xylosidase involved in the hydrolysis of xylan, a major structural heterogeneous polysaccharide found in plant biomass representing the second most abundant polysaccharide in the biosphere, after cellulose. The sequence is that of Probable exo-1,4-beta-xylosidase xlnD (xlnD) from Aspergillus fumigatus (strain CBS 144.89 / FGSC A1163 / CEA10) (Neosartorya fumigata).